Reading from the N-terminus, the 131-residue chain is Small ribosomal subunit protein uS8 (131 aa).

The protein belongs to the universal ribosomal protein uS8 family. As to quaternary structure, part of the 30S ribosomal subunit. Contacts proteins S5 and S12.

One of the primary rRNA binding proteins, it binds directly to 16S rRNA central domain where it helps coordinate assembly of the platform of the 30S subunit. The chain is Small ribosomal subunit protein uS8 from Dehalococcoides mccartyi (strain CBDB1).